A 133-amino-acid chain; its full sequence is Ribosome-binding factor A (133 aa).

The protein belongs to the RbfA family. Monomer. Binds 30S ribosomal subunits, but not 50S ribosomal subunits or 70S ribosomes.

Its subcellular location is the cytoplasm. One of several proteins that assist in the late maturation steps of the functional core of the 30S ribosomal subunit. Associates with free 30S ribosomal subunits (but not with 30S subunits that are part of 70S ribosomes or polysomes). Required for efficient processing of 16S rRNA. May interact with the 5'-terminal helix region of 16S rRNA. The sequence is that of Ribosome-binding factor A from Salmonella schwarzengrund (strain CVM19633).